Here is a 287-residue protein sequence, read N- to C-terminus: 4-hydroxybenzoate octaprenyltransferase (287 aa).

A run of 9 helical transmembrane segments spans residues 21–41 (VGIF…AKGA), 44–64 (FKIA…GCIV), 91–111 (VTEA…LVLL), 112–132 (LNRL…VYPF), 139–159 (LPQL…FAAT), 160–180 (VGHV…WPIV), 211–231 (LMIG…GWYL), 235–255 (YWFY…QFLI), and 263–283 (CFAA…GILL).

The protein belongs to the UbiA prenyltransferase family. Mg(2+) serves as cofactor.

It is found in the cell inner membrane. The enzyme catalyses all-trans-octaprenyl diphosphate + 4-hydroxybenzoate = 4-hydroxy-3-(all-trans-octaprenyl)benzoate + diphosphate. Its pathway is cofactor biosynthesis; ubiquinone biosynthesis. Catalyzes the prenylation of para-hydroxybenzoate (PHB) with an all-trans polyprenyl group. Mediates the second step in the final reaction sequence of ubiquinone-8 (UQ-8) biosynthesis, which is the condensation of the polyisoprenoid side chain with PHB, generating the first membrane-bound Q intermediate 3-octaprenyl-4-hydroxybenzoate. This chain is 4-hydroxybenzoate octaprenyltransferase, found in Coxiella burnetii (strain CbuK_Q154) (Coxiella burnetii (strain Q154)).